Here is a 591-residue protein sequence, read N- to C-terminus: Paxillin (591 aa).

Residue M1 is modified to N-acetylmethionine. The short motif at 3 to 15 (DLDALLADLESTT) is the LD motif 1 element. Positions 17–138 (HISKRPVFLS…SSPTVMSTSL (122 aa)) are disordered. The residue at position 31 (Y31) is a Phosphotyrosine; by PTK6. The span at 45 to 54 (VPPPVPPPPS) shows a compositional bias: pro residues. The span at 69-101 (WQPSGSRFIHQQPQSSSPVYGSSAKTSSVSNPQ) shows a compositional bias: polar residues. 2 positions are modified to phosphoserine: S83 and S85. The residue at position 88 (Y88) is a Phosphotyrosine. A Phosphoserine modification is found at S106. Residue Y118 is modified to Phosphotyrosine; by PTK6. Phosphoserine occurs at positions 119, 126, and 130. Residues 121 to 137 (PNKQKSAESSPTVMSTS) show a composition bias toward polar residues. Position 132 is a phosphothreonine (T132). Phosphoserine occurs at positions 137, 140, and 143. The short motif at 144 to 156 (ELDRLLLELNAVQ) is the LD motif 2 element. The tract at residues 156–213 (QHNPPGFPADEANSGPPLPGALSPHYGVPETNSPLGGKAGPLTKEKPKRNGGRGLEDV) is disordered. At Y181 the chain carries Phosphotyrosine. The LD motif 3 signature appears at 216–228 (SVESLLDELESSV). S230 bears the Phosphoserine mark. Residues 237-260 (VNQGEMSSPQRVTSTQQQTRISAS) form a disordered region. S244 carries the phosphoserine; by CDK5 modification. Residues S250, S258, S261, and S272 each carry the phosphoserine modification. The short motif at 265–276 (ELDELMASLSDF) is the LD motif 4 element. A compositionally biased stretch (basic and acidic residues) spans 289 to 300 (RCWAADWPRDGG). Positions 289–335 (RCWAADWPRDGGRSSPGGQDEGGFMAQGKTGSSSPPGGPPKPGSQLD) are disordered. Residues S303, S322, S332, and S340 each carry the phosphoserine modification. The LD motif 5 motif lies at 333-345 (QLDSMLGSLQSDL). LIM zinc-binding domains are found at residues 356 to 415 (GVCG…LFSP), 416 to 473 (RCYY…DMFA), 474 to 533 (PKCG…RRGS), and 534 to 591 (LCSG…KLFC). A Phosphoserine modification is found at S533.

This sequence belongs to the paxillin family. Binds to vinculin and to the SH3 domain of SRC. Interacts with GIT1, NUDT16L1/SDOS, PARVA, PARVB, SORBS1 and TGFB1I1. Component of cytoplasmic complexes, which also contain GIT1, ARHGEF6 and PAK1. Binds ASAP2. Interacts with RNF5 and PDCD10. Interacts with NEK3 and this interaction is prolactin-dependent. Interacts with PTK2/FAK1 and PTK2B/PYK2. Interacts with PTK6. Interacts with CD36. Interacts (via cytoplasmic domain) with CEACAM1; the interaction is phosphotyrosyl-dependent. Interacts with PXN; this complex stabilizes actin dynamics. Interacts with TRIM15. Interacts with PAK4; PAK4 acts as a scaffold to suppport PAXI phosphorylation at Ser-272. In terms of processing, phosphorylated by MAPK1/ERK2. Phosphorylated on tyrosine residues during integrin-mediated cell adhesion, embryonic development, fibroblast transformation and following stimulation of cells by mitogens. Phosphorylation at Ser-244 by CDK5 reduces its interaction with PTK2/FAK1 in matrix-cell focal adhesions (MCFA) during oligodendrocytes (OLs) differentiation. Phosphorylation at Tyr-31 and Tyr-118 by PTK6 promote the activation of RAC1 via CRK/CrKII, thereby promoting migration and invasion. Phosphorylation at Ser-250 by SLK is required for PXN redistribution and cell motility. Phosphorylation at Ser-272 promotes focal adhesion disassembly during cell migration.

It is found in the cytoplasm. The protein localises to the cytoskeleton. The protein resides in the cell junction. Its subcellular location is the focal adhesion. It localises to the cell cortex. In terms of biological role, cytoskeletal protein involved in actin-membrane attachment at sites of cell adhesion to the extracellular matrix (focal adhesion). Recruits other proteins such as TRIM15 to focal adhesion. This Pongo abelii (Sumatran orangutan) protein is Paxillin (PXN).